Here is a 90-residue protein sequence, read N- to C-terminus: Molybdopterin synthase sulfur carrier subunit (90 aa).

Gly-90 carries the 1-thioglycine; alternate modification. At Gly-90 the chain carries Glycyl adenylate; alternate.

This sequence belongs to the MoaD family. MOCS2A subfamily. Heterotetramer; composed of 2 small (Mocs2A) and 2 large (Mocs2B) subunits. Post-translationally, C-terminal thiocarboxylation occurs in 2 steps, it is first acyl-adenylated (-COAMP) via the hesA/moeB/thiF part of MOCS3, then thiocarboxylated (-COSH) via the rhodanese domain of MOCS3.

The protein resides in the cytoplasm. The protein operates within cofactor biosynthesis; molybdopterin biosynthesis. In terms of biological role, acts as a sulfur carrier required for molybdopterin biosynthesis. Component of the molybdopterin synthase complex that catalyzes the conversion of precursor Z into molybdopterin by mediating the incorporation of 2 sulfur atoms into precursor Z to generate a dithiolene group. In the complex, serves as sulfur donor by being thiocarboxylated (-COSH) at its C-terminus by MOCS3. After interaction with Mocs2B, the sulfur is then transferred to precursor Z to form molybdopterin. Involved during biosynthesis of the molybdenum cofactor. This Drosophila melanogaster (Fruit fly) protein is Molybdopterin synthase sulfur carrier subunit.